We begin with the raw amino-acid sequence, 643 residues long: Sodium/iodide cotransporter (643 aa).

Residues 1-14 (MEAVETGERPTFGA) are Extracellular-facing. The chain crosses the membrane as a helical span at residues 15–31 (WDYGVFALMLLVSTGIG). Over 32 to 56 (LWVGLARGGQRSAEDFFTGGRRLAA) the chain is Cytoplasmic. The discontinuously helical transmembrane segment at 57–80 (LPVGLSLSASFMSAVQVLGVPSEA) threads the bilayer. The Na(+) site is built by serine 69, valine 71, and glutamine 72. Residue valine 76 participates in iodide binding. Over 81-84 (YRYG) the chain is Extracellular. The helical transmembrane segment at 85-105 (LKFLWMCLGQLLNSVLTALLF) threads the bilayer. Methionine 90 is an iodide binding site. Residues 106–130 (MPVFYRLGLTSTYEYLEMRFSRAVR) lie on the Cytoplasmic side of the membrane. A helical membrane pass occupies residues 131-157 (LCGTLQYIVATMLYTGIVIYAPALILN). Tyrosine 144 is a binding site for Na(+). Over 158 to 163 (QVTGLD) the chain is Extracellular. Residues 164–181 (IWASLLSTGIICTFYTAV) form a helical membrane-spanning segment. At 182–189 (GGMKAVVW) the chain is on the cytoplasmic side. Residues 190–208 (TDVFQVVVMLSGFWVVLAR) form a helical membrane-spanning segment. Over 209–243 (GVMLVGGPRQVLTLAQNHSRINLMDFNPDPRSRYT) the chain is Extracellular. A discontinuously helical transmembrane segment spans residues 244–266 (FWTFVVGGTLVWLSMYGVNQAQV). Tryptophan 255 is an iodide binding site. Residue methionine 258 participates in Na(+) binding. The Cytoplasmic portion of the chain corresponds to 267–278 (QRYVACRTEKQA). A helical membrane pass occupies residues 279-301 (KLALLINQVGLFLIVSSAACCGI). The Extracellular segment spans residues 302–335 (VMFVFYTDCDPLLLGRISAPDQYMPLLVLDIFED). The helical transmembrane segment at 336–363 (LPGVPGLFLACAYSGTLSTASTSINAMA) threads the bilayer. At 364–386 (AVTVEDLIKPRLRSLAPRKLVII) the chain is on the cytoplasmic side. The chain crosses the membrane as a helical span at residues 387–408 (SKGLSLIYGSACLTVAALSSLL). Residues 409–411 (GGG) are Extracellular-facing. A helical membrane pass occupies residues 412–437 (VLQGSFTVMGVISGPLLGAFILGMFL). Leucine 413 lines the iodide pocket. Na(+) is bound by residues serine 416 and phenylalanine 417. An iodide-binding site is contributed by phenylalanine 417. Residues 438–441 (PACN) lie on the Cytoplasmic side of the membrane. Residues 442-465 (TPGVLAGLGAGLALSLWVALGATL) traverse the membrane as a helical segment. Residues 466-525 (YPPSEQTMRVLPSSAARCVALSVNASGLLDPALLPANDSSRAPSSGMDASRPALADSFYA) lie on the Extracellular side of the membrane. N-linked (GlcNAc...) asparagine glycosylation is found at asparagine 489 and asparagine 502. Residues 526–550 (ISYLYYGALGTLTTVLCGALISCLT) traverse the membrane as a helical segment. Over 551-643 (GPTKRSTLAP…GGRDQQETNL (93 aa)) the chain is Cytoplasmic. Serine 556 carries the post-translational modification Phosphoserine; by PKA. The disordered stretch occupies residues 623–643 (AGSWTPCVGHDGGRDQQETNL). Residues 633–643 (DGGRDQQETNL) show a composition bias toward basic and acidic residues.

Belongs to the sodium:solute symporter (SSF) (TC 2.A.21) family. As to quaternary structure, monomer. In terms of processing, glycosylated. Expression is primarily in thyroid tissue, but also to a lower extent in mammary gland and ovary. Expression is reduced in tumors.

The protein resides in the cell membrane. It localises to the cytoplasm. It carries out the reaction iodide(out) + 2 Na(+)(out) = iodide(in) + 2 Na(+)(in). The enzyme catalyses chlorate(out) + 2 Na(+)(out) = chlorate(in) + 2 Na(+)(in). It catalyses the reaction thiocyanate(out) + 2 Na(+)(out) = thiocyanate(in) + 2 Na(+)(in). The catalysed reaction is nitrate(out) + 2 Na(+)(out) = nitrate(in) + 2 Na(+)(in). It carries out the reaction selenocyanate(out) + 2 Na(+)(out) = selenocyanate(in) + 2 Na(+)(in). Dysidenin and perchlorate inhibit iodide transport activity. Oxyanions inhibit iodide transport activity by blocking the binding sites for iodide and one of the sodium ions. Sodium:iodide symporter that mediates the transport of iodide into the thyroid gland. Can also mediate the transport of chlorate, thiocynate, nitrate and selenocynate. In Homo sapiens (Human), this protein is Sodium/iodide cotransporter (SLC5A5).